The sequence spans 350 residues: Ferredoxin--NADP reductase (350 aa).

Residues threonine 25, glutamate 44, glutamine 52, tyrosine 57, valine 97, phenylalanine 132, aspartate 298, and serine 339 each coordinate FAD.

It belongs to the ferredoxin--NADP reductase type 2 family. Homodimer. It depends on FAD as a cofactor.

It catalyses the reaction 2 reduced [2Fe-2S]-[ferredoxin] + NADP(+) + H(+) = 2 oxidized [2Fe-2S]-[ferredoxin] + NADPH. This chain is Ferredoxin--NADP reductase, found in Chlorobium limicola (strain DSM 245 / NBRC 103803 / 6330).